The following is a 252-amino-acid chain: Probable transcriptional regulatory protein Fnod_1106 (252 aa).

The protein belongs to the TACO1 family.

Its subcellular location is the cytoplasm. This is Probable transcriptional regulatory protein Fnod_1106 from Fervidobacterium nodosum (strain ATCC 35602 / DSM 5306 / Rt17-B1).